The primary structure comprises 400 residues: Putative C-type lectin domain family 20 member A (400 aa).

A signal peptide spans 1–20; that stretch reads MLPRALLLSFCAAALQLVSS. C-type lectin domains follow at residues 26-131 and 159-275; these read LVKE…FLCY and ISGQ…FFCF. 4 disulfide bridges follow: C40–C130, C105–C122, C180–C274, and C248–C266. A disordered region spans residues 287-346; sequence ELPPLFHTSPTEMTEETTPRPGRAVASVGSGTDRRDTAAATEAQHLSSESKEKTSAQKSG.

The protein is Putative C-type lectin domain family 20 member A of Homo sapiens (Human).